Here is a 635-residue protein sequence, read N- to C-terminus: Paraneoplastic antigen-like protein 8B (635 aa).

Disordered stretches follow at residues proline 115–leucine 202, threonine 260–phenylalanine 332, and alanine 492–arginine 635. Positions serine 133 to alanine 147 are enriched in polar residues. Basic residues predominate over residues asparagine 156–glycine 183. Residues aspartate 261–alanine 273 show a composition bias toward basic and acidic residues. Acidic residues-rich tracts occupy residues proline 302–asparagine 329 and glycine 502–glutamate 524. Residues arginine 531 to threonine 540 are compositionally biased toward basic residues. Low complexity predominate over residues alanine 541 to alanine 557. Basic residues-rich tracts occupy residues arginine 558–glycine 568 and alanine 619–arginine 635.

Belongs to the PNMA family.

The protein is Paraneoplastic antigen-like protein 8B of Homo sapiens (Human).